The following is a 700-amino-acid chain: UvrABC system protein B (700 aa).

One can recognise a Helicase ATP-binding domain in the interval 26–183 (SGLHRGDRIQ…RALVGIQYLR (158 aa)). 39-46 (GVTGSGKT) provides a ligand contact to ATP. A Beta-hairpin motif is present at residues 92 to 115 (YYDYYQPEAYVPSSDTYIEKDASI). One can recognise a Helicase C-terminal domain in the interval 430–596 (QVDDLLHEIR…GVTKSVDEVR (167 aa)). Positions 608 to 627 (REGEAPAPRRLASESAPRSR) are disordered. The region spanning 631-666 (ETLVGELEIAMREAAVALDFEAAARLRDQLFEVRTA) is the UVR domain. The segment at 667-700 (LGQAPSEARGNAQAPKRPPGSAPQRRAGGGRRGR) is disordered.

Belongs to the UvrB family. As to quaternary structure, forms a heterotetramer with UvrA during the search for lesions. Interacts with UvrC in an incision complex.

The protein localises to the cytoplasm. The UvrABC repair system catalyzes the recognition and processing of DNA lesions. A damage recognition complex composed of 2 UvrA and 2 UvrB subunits scans DNA for abnormalities. Upon binding of the UvrA(2)B(2) complex to a putative damaged site, the DNA wraps around one UvrB monomer. DNA wrap is dependent on ATP binding by UvrB and probably causes local melting of the DNA helix, facilitating insertion of UvrB beta-hairpin between the DNA strands. Then UvrB probes one DNA strand for the presence of a lesion. If a lesion is found the UvrA subunits dissociate and the UvrB-DNA preincision complex is formed. This complex is subsequently bound by UvrC and the second UvrB is released. If no lesion is found, the DNA wraps around the other UvrB subunit that will check the other stand for damage. This Gemmatimonas aurantiaca (strain DSM 14586 / JCM 11422 / NBRC 100505 / T-27) protein is UvrABC system protein B.